Reading from the N-terminus, the 1329-residue chain is Synergin gamma (1329 aa).

Positions Met112–Ser152 form a coiled coil. Residues Gly175–Phe211 are disordered. Low complexity predominate over residues Thr197–Ser209. The EH domain maps to Asn393 to Thr504. Residues Asp555–Phe559 carry the DFXDF motif 1 motif. Phosphoserine is present on Ser571. Over residues Val578–Pro594 the composition is skewed to polar residues. A disordered region spans residues Val578–Leu600. Position 609 is an N6-acetyllysine (Lys609). The interaction with AP1G1 stretch occupies residues Lys614–Ser878. Disordered regions lie at residues Gly661–Gln701 and Ala730–Leu753. Residue Ser676 is modified to Phosphoserine. The interaction with AP1G1, AP1G2 and GGA1 stretch occupies residues Leu761–Glu773. Residues Asp785–Phe789 carry the DFXDF motif 2 motif. Positions Ile797–Ser835 are disordered. Residues Pro801–Gly814 show a composition bias toward basic and acidic residues. Residue Ser815 is modified to Phosphoserine. Lys836 is subject to N6-acetyllysine. 2 positions are modified to phosphoserine: Ser844 and Ser864. Disordered stretches follow at residues Lys856–Asp922, His941–Phe1042, and Ser1088–Ser1113. Over residues Ser864–Ser873 the composition is skewed to basic and acidic residues. The short motif at Asp867–Phe871 is the DFXDF motif 3 element. Low complexity predominate over residues Ser874–Lys883. Residues Ser904, Ser944, Ser947, Ser997, Ser1021, Ser1088, Ser1090, Ser1102, and Ser1113 each carry the phosphoserine modification. Residues Ser944 to Gly955 are compositionally biased toward polar residues. The segment covering Glu1016 to Ser1028 has biased composition (polar residues). Position 1115 is a phosphothreonine (Thr1115).

In terms of assembly, self-associates. Interacts with GGA1 (via GAE domain). Interacts with GGA2 and GGA3. Interacts with AP1G1 (via GAE domain), a subunit of adapter protein complex AP-1. Interacts with AP1G2 (via GAE domain) a subunit of adapter protein complex AP-1. Component of the aftiphilin/p200/gamma-synergin complex, at least composed of AFTPH/aftiphilin, HEATR5B/p200a and SYNRG/gamma-synergin, which plays a role in the AP1G1/AP-1-mediated trafficking of transferrin from early to recycling endosomes. Within the complex interacts with AFTPH/aftiphilin and HEATR5B/p200a; the interactions are direct. Interacts (via EH domain) with SCAMP1. As to expression, detected in brain and liver (at protein level). Ubiquitously expressed.

Its subcellular location is the cytoplasm. It localises to the golgi apparatus. It is found in the trans-Golgi network membrane. The protein resides in the perinuclear region. The protein localises to the cytoplasmic vesicle. Its subcellular location is the clathrin-coated vesicle. Plays a role in endocytosis and/or membrane trafficking at the trans-Golgi network (TGN). May act by linking the adapter protein complex AP-1 to other proteins. Component of clathrin-coated vesicles. Component of the aftiphilin/p200/gamma-synergin complex, which plays roles in AP1G1/AP-1-mediated protein trafficking including the trafficking of transferrin from early to recycling endosomes, and the membrane trafficking of furin and the lysosomal enzyme cathepsin D between the trans-Golgi network (TGN) and endosomes. This chain is Synergin gamma (Synrg), found in Rattus norvegicus (Rat).